Reading from the N-terminus, the 856-residue chain is Envelope glycoprotein gp150 (856 aa).

Over 1-785 (MAEGFAANRQ…WIGNIPQYLK (785 aa)) the chain is Extracellular. N-linked (GlcNAc...) asparagine; by host glycans are attached at residues Asn220, Asn258, Asn269, Asn274, Asn298, Asn330, Asn336, Asn342, Asn418, Asn422, Asn448, Asn481, Asn499, Asn518, Asn531, Asn548, and Asn551. Positions 616–636 (VMLALATVLSIAGAGTGATAI) are fusion peptide. Residues 643 to 693 (HQVLATHQEAIEKVTGALKINNLRLVTLEHQVLVIGLKVEAMEKFLYTAFA) adopt a coiled-coil conformation. The immunosuppression stretch occupies residues 662 to 680 (INNLRLVTLEHQVLVIGLK). N-linked (GlcNAc...) asparagine; by host glycosylation is found at Asn717, Asn721, Asn729, and Asn737. Positions 736–772 (YNQTKDLQQKFYEIIMDIEQNNVQGKTGIQQLQKWED) form a coiled coil. Residues 786 to 806 (GLLGGILGIGLGVLLLILCLP) form a helical membrane-spanning segment. Residues 807-856 (TLVDCIRNCIHKILGYTVIAMPEVEGEEIQPQMELRRNGRQCGMSEKEEE) lie on the Cytoplasmic side of the membrane.

In terms of assembly, the mature envelope protein (Env) consists of a trimer of SU-TM heterodimers attached by noncovalent interactions or by a labile interchain disulfide bond. Post-translationally, specific enzymatic cleavages in vivo yield mature proteins. Envelope glycoproteins are synthesized as an inactive precursor that is N-glycosylated and processed likely by host cell furin or by a furin-like protease in the Golgi to yield the mature SU and TM proteins. The cleavage site between SU and TM requires the minimal sequence [KR]-X-[KR]-R.

The protein localises to the virion membrane. It is found in the host cell membrane. Functionally, the surface protein (SU) attaches the virus to the host cell by binding to its receptor. This interaction triggers the refolding of the transmembrane protein (TM) and is thought to activate its fusogenic potential by unmasking its fusion peptide. Fusion occurs at the host cell plasma membrane. In terms of biological role, the transmembrane protein (TM) acts as a class I viral fusion protein. Under the current model, the protein has at least 3 conformational states: pre-fusion native state, pre-hairpin intermediate state, and post-fusion hairpin state. During viral and target cell membrane fusion, the coiled coil regions (heptad repeats) assume a trimer-of-hairpins structure, positioning the fusion peptide in close proximity to the C-terminal region of the ectodomain. The formation of this structure appears to drive apposition and subsequent fusion of viral and target cell membranes. Membranes fusion leads to delivery of the nucleocapsid into the cytoplasm. The polypeptide is Envelope glycoprotein gp150 (env) (Felidae (cat family)).